A 423-amino-acid polypeptide reads, in one-letter code: MSASAVYVLDLKGKVLICRNYRGDVDMSEVEHFMPILMEKEEEGMLSPILAHGGVRFMWIKHNNLYLVATSKKNACVSLVFSFLYKVVQVFSEYFKELEEESIRDNFVIIYELLDELMDFGYPQTTDSKILQEYITQEGHKLETGAPRPPATVTNAVSWRSEGIKYRKNEVFLDVIESVNLLVSANGNVLRSEIVGSIKMRVFLSGMPELRLGLNDKVLFDNTGRGKSKSVELEDVKFHQCVRLSRFENDRTISFIPPDGEFELMSYRLNTHVKPLIWIESVIEKHSHSRIEYMIKAKSQFKRRSTANNVEIHIPVPNDADSPKFKTTVGSVKWVPENSEIVWSIKSFPGGKEYLMRAHFGLPSVEAEDKEGKPPISVKFEIPYFTTSGIQVRYLKIIEKSGYQALPWVRYITQNGDYQLRTQ.

Ser2 carries the N-acetylserine modification. Phosphothreonine is present on residues Thr152, Thr154, and Thr223. Positions 168–421 constitute an MHD domain; it reads KNEVFLDVIE…ITQNGDYQLR (254 aa).

Belongs to the adaptor complexes medium subunit family. Adaptor protein complex 1 (AP-1) is a heterotetramer composed of two large adaptins (gamma-type subunit AP1G1 and beta-type subunit AP1B1), a medium adaptin (mu-type subunit AP1M1 or AP1M2) and a small adaptin (sigma-type subunit AP1S1 or AP1S2 or AP1S3). Interacts with MARCHF11. In terms of processing, phosphorylation of membrane-bound AP1M1/AP1M2 increases its affinity for sorting signals.

The protein resides in the cytoplasmic vesicle. It localises to the clathrin-coated vesicle membrane. It is found in the golgi apparatus. Functionally, subunit of clathrin-associated adaptor protein complex 1 that plays a role in protein sorting in the trans-Golgi network (TGN) and endosomes. The AP complexes mediate the recruitment of clathrin to membranes and the recognition of sorting signals within the cytosolic tails of transmembrane cargo molecules. The sequence is that of AP-1 complex subunit mu-1 from Bos taurus (Bovine).